The following is a 229-amino-acid chain: MTATAPVITVDGPSGAGKGTLCKALAESLGWRLLDSGAIYRVLALAALHHQVDITSEEALVPLAAHLDVRFIAQDGKLQVILEGEDVSNEIRTETVGNTASQAAAFPRVREALLRRQRAFREAPGLIADGRDMGTVVFPDAPVKIFLDASSEERAHRRMLQLQEKGFNVNFERLLAEIKERDDRDRNRPIAPLVPASDALVLDSTSMSIDEVIQRALTYAHEVLALPQQ.

An ATP-binding site is contributed by 12-20 (GPSGAGKGT).

It belongs to the cytidylate kinase family. Type 1 subfamily.

The protein localises to the cytoplasm. The enzyme catalyses CMP + ATP = CDP + ADP. The catalysed reaction is dCMP + ATP = dCDP + ADP. The protein is Cytidylate kinase of Serratia proteamaculans (strain 568).